Here is a 308-residue protein sequence, read N- to C-terminus: Eukaryotic translation initiation factor 3 subunit G (308 aa).

The interval 1–23 (MAPVAAPSTSQPAGGKPMNWADE) is disordered. Residues 225–303 (PTLRVTNLSE…LILSCQWSLP (79 aa)) form the RRM domain.

This sequence belongs to the eIF-3 subunit G family. Component of the eukaryotic translation initiation factor 3 (eIF-3) complex.

The protein resides in the cytoplasm. RNA-binding component of the eukaryotic translation initiation factor 3 (eIF-3) complex, which is involved in protein synthesis of a specialized repertoire of mRNAs and, together with other initiation factors, stimulates binding of mRNA and methionyl-tRNAi to the 40S ribosome. The eIF-3 complex specifically targets and initiates translation of a subset of mRNAs involved in cell proliferation. This subunit can bind 18S rRNA. The polypeptide is Eukaryotic translation initiation factor 3 subunit G (Mycosarcoma maydis (Corn smut fungus)).